The following is a 248-amino-acid chain: Tropomyosin alpha-4 chain (248 aa).

At Ala2 the chain carries N-acetylalanine. Residues 2–248 adopt a coiled-coil conformation; that stretch reads AGLNSLEAVK…DQTLNELNCI (247 aa). Residue Ser6 is modified to Phosphoserine. The disordered stretch occupies residues 15–47; it reads QALQQQADEAEDRAQGLQRELDGERERREKAEG. The span at 33 to 47 shows a compositional bias: basic and acidic residues; it reads RELDGERERREKAEG. Lys177 and Lys215 each carry N6-acetyllysine. Thr216 is modified (phosphothreonine).

This sequence belongs to the tropomyosin family. In terms of assembly, homodimer. Heterodimer of an alpha (TPM1, TPM3 or TPM4) and a beta (TPM2) chain. Detected in cardiac tissue and platelets, the form found in cardiac tissue is a higher molecular weight than the form found in platelets. Expressed at higher levels in the platelets of hypertensive patients with cardiac hypertrophy than in the platelets of hypertensive patients without cardiac hypertrophy (at protein level).

It is found in the cytoplasm. It localises to the cytoskeleton. Its function is as follows. Binds to actin filaments in muscle and non-muscle cells. Plays a central role, in association with the troponin complex, in the calcium dependent regulation of vertebrate striated muscle contraction. Smooth muscle contraction is regulated by interaction with caldesmon. In non-muscle cells is implicated in stabilizing cytoskeleton actin filaments. Binds calcium. Plays a role in platelet biogenesis. The polypeptide is Tropomyosin alpha-4 chain (TPM4) (Homo sapiens (Human)).